Reading from the N-terminus, the 320-residue chain is 4-hydroxy-3-methylbut-2-enyl diphosphate reductase (320 aa).

Cys-13 contacts [4Fe-4S] cluster. His-41 and His-75 together coordinate (2E)-4-hydroxy-3-methylbut-2-enyl diphosphate. The dimethylallyl diphosphate site is built by His-41 and His-75. His-41 and His-75 together coordinate isopentenyl diphosphate. Position 97 (Cys-97) interacts with [4Fe-4S] cluster. Residue His-125 coordinates (2E)-4-hydroxy-3-methylbut-2-enyl diphosphate. Dimethylallyl diphosphate is bound at residue His-125. Residue His-125 coordinates isopentenyl diphosphate. The Proton donor role is filled by Glu-127. Thr-168 is a (2E)-4-hydroxy-3-methylbut-2-enyl diphosphate binding site. Cys-225 serves as a coordination point for [4Fe-4S] cluster. 4 residues coordinate (2E)-4-hydroxy-3-methylbut-2-enyl diphosphate: Ser-253, Ser-254, Asn-255, and Ser-302. Dimethylallyl diphosphate is bound by residues Ser-253, Ser-254, Asn-255, and Ser-302. Isopentenyl diphosphate contacts are provided by Ser-253, Ser-254, Asn-255, and Ser-302.

Belongs to the IspH family. It depends on [4Fe-4S] cluster as a cofactor.

The catalysed reaction is isopentenyl diphosphate + 2 oxidized [2Fe-2S]-[ferredoxin] + H2O = (2E)-4-hydroxy-3-methylbut-2-enyl diphosphate + 2 reduced [2Fe-2S]-[ferredoxin] + 2 H(+). It carries out the reaction dimethylallyl diphosphate + 2 oxidized [2Fe-2S]-[ferredoxin] + H2O = (2E)-4-hydroxy-3-methylbut-2-enyl diphosphate + 2 reduced [2Fe-2S]-[ferredoxin] + 2 H(+). It participates in isoprenoid biosynthesis; dimethylallyl diphosphate biosynthesis; dimethylallyl diphosphate from (2E)-4-hydroxy-3-methylbutenyl diphosphate: step 1/1. It functions in the pathway isoprenoid biosynthesis; isopentenyl diphosphate biosynthesis via DXP pathway; isopentenyl diphosphate from 1-deoxy-D-xylulose 5-phosphate: step 6/6. Catalyzes the conversion of 1-hydroxy-2-methyl-2-(E)-butenyl 4-diphosphate (HMBPP) into a mixture of isopentenyl diphosphate (IPP) and dimethylallyl diphosphate (DMAPP). Acts in the terminal step of the DOXP/MEP pathway for isoprenoid precursor biosynthesis. This is 4-hydroxy-3-methylbut-2-enyl diphosphate reductase from Chlorobium luteolum (strain DSM 273 / BCRC 81028 / 2530) (Pelodictyon luteolum).